The primary structure comprises 503 residues: Depupylase (503 aa).

Positions 8 and 92 each coordinate Mg(2+). D94 serves as the catalytic Proton acceptor. E99 contacts Mg(2+). ATP is bound at residue 101 to 102 (ST). Residue H155 coordinates Mg(2+). Residues N157 and R239 each contribute to the ATP site. Position 241 (H241) interacts with Mg(2+).

It belongs to the Pup ligase/Pup deamidase family. Pup deamidase subfamily. As to quaternary structure, likely interacts with the C-terminal half of the prokaryotic ubiquitin-like protein Pup. ATP serves as cofactor.

It functions in the pathway protein degradation; proteasomal Pup-dependent pathway. Functionally, displays depupylase (DPUP) activity, removing conjugated Pup from target proteins; is thus involved in the recycling of Pup and may function similarly to deubiquitinases (DUBs) in eukaryotes to prevent or promote proteasomal degradation of certain proteins. Is also able to catalyze the deamidation of the C-terminal glutamine to glutamate in a variant of the prokaryotic ubiquitin-like protein Pup; however, since Pup from A.cellulolyticus possesses a C-terminal glutamate, this deamidase activity may be of no significance in vivo. The protein is Depupylase (dop) of Acidothermus cellulolyticus (strain ATCC 43068 / DSM 8971 / 11B).